A 111-amino-acid chain; its full sequence is Universal stress protein B (111 aa).

2 helical membrane passes run 1-21 (MIST…NMAR) and 90-110 (FILT…LMIW).

The protein belongs to the universal stress protein B family.

The protein resides in the cell inner membrane. This Escherichia coli O45:K1 (strain S88 / ExPEC) protein is Universal stress protein B.